A 340-amino-acid chain; its full sequence is Nesprin-4 (340 aa).

Disordered stretches follow at residues 1 to 86 (MAQF…DGGK) and 254 to 277 (HRRRLQKPQDKKRQGPPSLPDAML). Residues 1-291 (MAQFPLLGHG…GVPAPASRRP (291 aa)) are Cytoplasmic-facing. The segment covering 53 to 63 (APEHFMDEPKS) has biased composition (basic and acidic residues). Residues 283–340 (VPAPASRRPLTFLLLLLFLLLVGATLLLPLSGVPCCSHTRLARTPYLVLSYVNGLPPI) enclose the KASH domain. The chain crosses the membrane as a helical; Anchor for type IV membrane protein span at residues 292 to 312 (LTFLLLLLFLLLVGATLLLPL). Over 313–340 (SGVPCCSHTRLARTPYLVLSYVNGLPPI) the chain is Perinuclear space.

Belongs to the nesprin family. In terms of assembly, core component of LINC complexes which are composed of inner nuclear membrane SUN domain-containing proteins coupled to outer nuclear membrane KASH domain-containing nesprins. SUN and KASH domain-containing proteins seem to bind each other promiscuously; however, differentially expression of LINC complex constituents can give rise to specific assemblies. Probably part of a SUN1-containing LINC complex. Interacts with kinesins KIF5B and KLC1.

The protein localises to the nucleus outer membrane. Functionally, as a component of the LINC (LInker of Nucleoskeleton and Cytoskeleton) complex, involved in the connection between the nuclear lamina and the cytoskeleton. The nucleocytoplasmic interactions established by the LINC complex play an important role in the transmission of mechanical forces across the nuclear envelope and in nuclear movement and positioning. Behaves as a kinesin cargo, providing a functional binding site for kinesin-1 at the nuclear envelope. Hence may contribute to the establishment of secretory epithelial morphology, by promoting kinesin-dependent apical migration of the centrosome and Golgi apparatus and basal localization of the nucleus. This Rattus norvegicus (Rat) protein is Nesprin-4 (Syne4).